The chain runs to 133 residues: Nickel-responsive regulator (133 aa).

The Ni(2+) site is built by His76, His87, His89, and Cys95.

The protein belongs to the transcriptional regulatory CopG/NikR family. Homotetramer. The cofactor is Ni(2+).

Transcriptional repressor of the nikABCDE operon. Is active in the presence of excessive concentrations of intracellular nickel. In Escherichia coli (strain SMS-3-5 / SECEC), this protein is Nickel-responsive regulator.